The chain runs to 133 residues: Aspartate 1-decarboxylase (133 aa).

Ser-26 functions as the Schiff-base intermediate with substrate; via pyruvic acid in the catalytic mechanism. The residue at position 26 (Ser-26) is a Pyruvic acid (Ser). A substrate-binding site is contributed by Thr-58. Tyr-59 serves as the catalytic Proton donor. A substrate-binding site is contributed by 74–76; the sequence is GAA.

The protein belongs to the PanD family. In terms of assembly, heterooctamer of four alpha and four beta subunits. Pyruvate is required as a cofactor. In terms of processing, is synthesized initially as an inactive proenzyme, which is activated by self-cleavage at a specific serine bond to produce a beta-subunit with a hydroxyl group at its C-terminus and an alpha-subunit with a pyruvoyl group at its N-terminus.

It is found in the cytoplasm. It catalyses the reaction L-aspartate + H(+) = beta-alanine + CO2. Its pathway is cofactor biosynthesis; (R)-pantothenate biosynthesis; beta-alanine from L-aspartate: step 1/1. Functionally, catalyzes the pyruvoyl-dependent decarboxylation of aspartate to produce beta-alanine. The sequence is that of Aspartate 1-decarboxylase from Legionella pneumophila (strain Paris).